Reading from the N-terminus, the 449-residue chain is Probable protoheme IX farnesyltransferase, mitochondrial (449 aa).

A compositionally biased stretch (low complexity) spans T99–Q138. A disordered region spans residues T99 to K140. 7 helical membrane passes run L163 to L183, M245 to W267, T279 to G299, A303 to L323, S352 to F372, V374 to I394, and L402 to Q422.

It belongs to the UbiA prenyltransferase family.

The protein localises to the mitochondrion membrane. Functionally, converts protoheme IX and farnesyl diphosphate to heme O. In Dictyostelium discoideum (Social amoeba), this protein is Probable protoheme IX farnesyltransferase, mitochondrial (cox10).